Reading from the N-terminus, the 59-residue chain is Large ribosomal subunit protein bL32c (59 aa).

The disordered stretch occupies residues S37–K59.

The protein belongs to the bacterial ribosomal protein bL32 family.

It is found in the plastid. The protein resides in the chloroplast. This chain is Large ribosomal subunit protein bL32c, found in Saccharum hybrid (Sugarcane).